The sequence spans 986 residues: MALEDMEKKYRISDIARELQVSPQEVLLFVKQEGGRVASTSSMVGEEIHGLIFGHFSVEKKMVDETKKIRAEKEKRLSRLEEQSRKTYEKEQHLSETLSPPAPPLVVVHEPKKEVIVAAPIENIPEPPSKPLEIPVAETPASEEPDAPPAVTELIEQPVVIEQQPLAPVSDAPVPPVIIELPVPSEVPESQVLPESRVLPESQVLSESPLLPEPPVLSEPQEQQELPELPELPEIPALPEPAPKKEEPSVNEHLVSFDAPQMMGGLTVLGTLDMQAGRHKKNRKKNFQEQADALKDEFEPKPAEESRVEEKVVVAKKPPVKAAADVKPKPVVADSSSSAKKKGKKKKKPAVDDKVISANIQKTISGIDDRSSTGSRQKFRKMRRNEREREHEEDEAFREAQRLVVRVTEYASPHELAELMGITAKDIIQKCFALGKFVTINQRLDKESIELIALEFGFEAEFISEVEATAVIVTEDAEADMQTRPPVVTIMGHVDHGKTSLLDYIRNSKVVAGESGGITQHIGAYEVTVEGDRKITFLDTPGHEAFTAMRARGAQVTDIVILVVAADDSVMPQTIEAINHAKAAGVPIVVALNKIDKVEANPEKIKTQLSEAGVLVEEWGGVYQCQEISAKKGIGIAELMEKVLTEAEMRELRGNYSREVPASGIIVESELDKGKGVISTVLVQRGILKVGDPFVAGNTMGKVRALMDERGKRIPFANPSQPVRVLGFEDLPQSGDALTVMVTDREARDLAQKRQVIRREHDFRRSTRVKLDSIARQIKEGLMKELSVIIKADTDGSIQALADGLMKIQNEEVKVQIIHQGVGQITETDVLLAAASDAIIIGFRVRPNVNAKKLAEKEDLDVRFYSVIYHVLEDVEKALEGMLSPELHEESLGSLEIRQIFKVPKIGNVGGCYMLEGKMFRDSKVRLLRDGVQIYEGQLAALKRFKDDVKEVDAGYECGMSLKNYDDIKVGDIVEAYKIVEKKRKL.

Positions 75 to 94 (KRLSRLEEQSRKTYEKEQHL) are enriched in basic and acidic residues. Disordered regions lie at residues 75-105 (KRLS…APPL), 127-148 (PPSK…PDAP), 185-258 (SEVP…VSFD), and 277-394 (GRHK…HEED). Low complexity-rich tracts occupy residues 185–210 (SEVP…ESPL) and 218–235 (SEPQ…LPEI). Residues 292–313 (DALKDEFEPKPAEESRVEEKVV) show a composition bias toward basic and acidic residues. Over residues 315 to 338 (AKKPPVKAAADVKPKPVVADSSSS) the composition is skewed to low complexity. Residues 339 to 348 (AKKKGKKKKK) show a composition bias toward basic residues. The 171-residue stretch at 483-653 (TRPPVVTIMG…LTEAEMRELR (171 aa)) folds into the tr-type G domain. A G1 region spans residues 492–499 (GHVDHGKT). 492-499 (GHVDHGKT) serves as a coordination point for GTP. The tract at residues 517–521 (GITQH) is G2. The tract at residues 539–542 (DTPG) is G3. GTP-binding positions include 539-543 (DTPGH) and 593-596 (NKID). A G4 region spans residues 593–596 (NKID). Residues 629–631 (SAK) form a G5 region.

This sequence belongs to the TRAFAC class translation factor GTPase superfamily. Classic translation factor GTPase family. IF-2 subfamily.

It localises to the cytoplasm. One of the essential components for the initiation of protein synthesis. Protects formylmethionyl-tRNA from spontaneous hydrolysis and promotes its binding to the 30S ribosomal subunits. Also involved in the hydrolysis of GTP during the formation of the 70S ribosomal complex. This chain is Translation initiation factor IF-2, found in Pelodictyon phaeoclathratiforme (strain DSM 5477 / BU-1).